A 506-amino-acid polypeptide reads, in one-letter code: Trans-cinnamate 4-monooxygenase C4H1 (506 aa).

Short sequence motifs (nuclear localization signal) lie at residues Val161–Ala168 and Gln247–Lys254. Cys448 provides a ligand contact to heme.

Belongs to the cytochrome P450 family. It depends on heme as a cofactor.

Its subcellular location is the nucleus. It carries out the reaction (E)-cinnamate + reduced [NADPH--hemoprotein reductase] + O2 = (E)-4-coumarate + oxidized [NADPH--hemoprotein reductase] + H2O + H(+). It participates in phenylpropanoid metabolism; trans-4-coumarate biosynthesis; trans-4-coumarate from trans-cinnamate: step 1/1. In terms of biological role, component of the floral volatile benzenoid/phenylpropanoid (FVBP) biosynthetic pathway that controls carbon flux to pigments essential for pollination or UV protection, to numerous pytoalexins synthesized by plants when challenged by pathogens, and to lignins. The polypeptide is Trans-cinnamate 4-monooxygenase C4H1 (Petunia hybrida (Petunia)).